Reading from the N-terminus, the 26-residue chain is Neprilysin (26 aa).

The protein belongs to the peptidase M13 family. Zn(2+) serves as cofactor.

The protein resides in the cell membrane. It catalyses the reaction Preferential cleavage of polypeptides between hydrophobic residues, particularly with Phe or Tyr at P1'.. It carries out the reaction substance P + H2O = substance P(1-9) + L-Leu-L-Met-NH2. The enzyme catalyses substance P + H2O = substance P(1-7) + L-Phe-Gly-L-Leu-L-Met-NH2. The catalysed reaction is neurotensin + H2O = neurotensin(1-11) + L-isoleucyl-L-leucine. It catalyses the reaction neurotensin + H2O = neurotensin(1-10) + L-tyrosyl-L-isoleucyl-L-leucine. In terms of biological role, thermolysin-like specificity, but is almost confined on acting on polypeptides of up to 30 amino acids. Biologically important in the destruction of opioid peptides such as Met- and Leu-enkephalins by cleavage of a Gly-Phe bond. Catalyzes cleavage of bradykinin, substance P and neurotensin peptides. Able to cleave angiotensin-1, angiotensin-2 and angiotensin 1-9. Involved in the degradation of atrial natriuretic factor (ANF) and brain natriuretic factor (BNP(1-32)). Displays UV-inducible elastase activity toward skin preelastic and elastic fibers. The chain is Neprilysin (MME) from Sus scrofa (Pig).